Here is a 346-residue protein sequence, read N- to C-terminus: Zinc-type alcohol dehydrogenase-like protein C1773.06c (346 aa).

This sequence belongs to the zinc-containing alcohol dehydrogenase family. Quinone oxidoreductase subfamily.

It localises to the cytoplasm. The chain is Zinc-type alcohol dehydrogenase-like protein C1773.06c from Schizosaccharomyces pombe (strain 972 / ATCC 24843) (Fission yeast).